The sequence spans 456 residues: Protein disulfide-isomerase TMX3 (456 aa).

A signal peptide spans 1–29; the sequence is MANAVGRRSWAALRLCAAVILLDLAVCKG. The 102-residue stretch at 30–131 folds into the Thioredoxin domain; it reads FVEDLNESFK…KDDIIEFAHR (102 aa). The Lumenal portion of the chain corresponds to 30–378; the sequence is FVEDLNESFK…TIVSIFKSSP (349 aa). N-linked (GlcNAc...) asparagine glycosylation is present at Asn-35. Active-site nucleophile residues include Cys-56 and Cys-59. Cys-56 and Cys-59 are oxidised to a cystine. N-linked (GlcNAc...) asparagine glycans are attached at residues Asn-261 and Asn-316. Residues 379-399 form a helical membrane-spanning segment; sequence LMGCFLFGLPLGVISIMCYGI. Over 400–456 the chain is Cytoplasmic; that stretch reads YTADTDGGYIEERYEVSKSEMENQEQIEESKEQESSSGGSLAPTVQEPKDVLEKKKD. A disordered region spans residues 416 to 456; that stretch reads SKSEMENQEQIEESKEQESSSGGSLAPTVQEPKDVLEKKKD. Residues 446-456 are compositionally biased toward basic and acidic residues; sequence EPKDVLEKKKD. The Di-lysine motif signature appears at 453–456; sequence KKKD.

Belongs to the protein disulfide isomerase family.

It localises to the endoplasmic reticulum membrane. It catalyses the reaction Catalyzes the rearrangement of -S-S- bonds in proteins.. Its function is as follows. Probable disulfide isomerase, which participates in the folding of proteins containing disulfide bonds. May act as a dithiol oxidase. Acts as a regulator of endoplasmic reticulum-mitochondria contact sites via its ability to regulate redox signals. This is Protein disulfide-isomerase TMX3 (Tmx3) from Mus musculus (Mouse).